The following is a 394-amino-acid chain: 1-deoxy-D-xylulose 5-phosphate reductoisomerase (394 aa).

Residues threonine 28, glycine 29, serine 30, isoleucine 31, asparagine 57, and asparagine 133 each coordinate NADPH. Lysine 134 is a binding site for 1-deoxy-D-xylulose 5-phosphate. Glutamate 135 is an NADPH binding site. A Mn(2+)-binding site is contributed by aspartate 157. 1-deoxy-D-xylulose 5-phosphate is bound by residues serine 158, glutamate 159, serine 183, and histidine 206. Glutamate 159 serves as a coordination point for Mn(2+). Glycine 212 contacts NADPH. 1-deoxy-D-xylulose 5-phosphate contacts are provided by serine 219, asparagine 224, lysine 225, and glutamate 228. Position 228 (glutamate 228) interacts with Mn(2+).

It belongs to the DXR family. It depends on Mg(2+) as a cofactor. Mn(2+) serves as cofactor.

It catalyses the reaction 2-C-methyl-D-erythritol 4-phosphate + NADP(+) = 1-deoxy-D-xylulose 5-phosphate + NADPH + H(+). It functions in the pathway isoprenoid biosynthesis; isopentenyl diphosphate biosynthesis via DXP pathway; isopentenyl diphosphate from 1-deoxy-D-xylulose 5-phosphate: step 1/6. Functionally, catalyzes the NADPH-dependent rearrangement and reduction of 1-deoxy-D-xylulose-5-phosphate (DXP) to 2-C-methyl-D-erythritol 4-phosphate (MEP). The polypeptide is 1-deoxy-D-xylulose 5-phosphate reductoisomerase (Nocardia farcinica (strain IFM 10152)).